Consider the following 578-residue polypeptide: SUMOylated effector protein AmpA (578 aa).

The segment at 144 to 169 (PQTVDPSVVESATGSGVDTQEEQEID) is disordered. 3 consecutive repeat copies span residues 180-272 (TEEQ…SVEA), 304-425 (KEET…VSVE), and 428-557 (TEEP…MQQE). Positions 180–557 (TEEQEVILEE…VEADAGMQQE (378 aa)) are 3 X approximate tandem repeats. Residues 516–578 (VSVEADAGMQ…DPDDEDVLSY (63 aa)) form a disordered region.

Post-translationally, polysumoylated during infection on at least two lysine residues, in the N- and C-terminal section. SUMO2/3 modification of AmpA throughout the infection cycle is likely critical for bacterial intracellular survival, while terminal SUMO1 conjugation of AmpA may promote a late-stage infection cycle event. Only a small portion of the available AmpA pool is actually SUMOylated at any given time.

The protein resides in the secreted. Its subcellular location is the host membrane. The protein localises to the host cytoplasm. It localises to the host cytosol. Secreted effector that hijacks host cell SUMOylation during A.phagocytophilum infection and is important for the pathogen's intracellular survival. The polypeptide is SUMOylated effector protein AmpA (Anaplasma phagocytophilum (strain HZ)).